Reading from the N-terminus, the 432-residue chain is Adenylosuccinate synthetase (432 aa).

GTP-binding positions include 12-18 (GDEGKGK) and 40-42 (GHT). The active-site Proton acceptor is aspartate 13. The Mg(2+) site is built by aspartate 13 and glycine 40. Residues 13-16 (DEGK), 38-41 (NAGH), threonine 129, arginine 143, glutamine 224, threonine 239, and arginine 303 each bind IMP. Histidine 41 acts as the Proton donor in catalysis. Residue 299 to 305 (VTTGRRR) coordinates substrate. Residues arginine 305, 331–333 (KLD), and 413–415 (GVG) each bind GTP.

It belongs to the adenylosuccinate synthetase family. Homodimer. It depends on Mg(2+) as a cofactor.

The protein resides in the cytoplasm. The enzyme catalyses IMP + L-aspartate + GTP = N(6)-(1,2-dicarboxyethyl)-AMP + GDP + phosphate + 2 H(+). The protein operates within purine metabolism; AMP biosynthesis via de novo pathway; AMP from IMP: step 1/2. Plays an important role in the de novo pathway of purine nucleotide biosynthesis. Catalyzes the first committed step in the biosynthesis of AMP from IMP. The polypeptide is Adenylosuccinate synthetase (Mycobacterium marinum (strain ATCC BAA-535 / M)).